The following is a 69-amino-acid chain: Sec-independent protein translocase protein TatA (69 aa).

The helical transmembrane segment at 1–21 (MFGKLGMPELVLIFAVALVIF) threads the bilayer.

Belongs to the TatA/E family. As to quaternary structure, forms a complex with TatC.

It is found in the cell membrane. In terms of biological role, part of the twin-arginine translocation (Tat) system that transports large folded proteins containing a characteristic twin-arginine motif in their signal peptide across membranes. TatA could form the protein-conducting channel of the Tat system. The chain is Sec-independent protein translocase protein TatA from Alkaliphilus metalliredigens (strain QYMF).